We begin with the raw amino-acid sequence, 47 residues long: Protein PsbN (47 aa).

The helical transmembrane segment at 7–29 (VAISISCLLISFTGYALYTAFGN) threads the bilayer.

Belongs to the PsbN family.

It localises to the plastid membrane. May play a role in photosystem I and II biogenesis. The polypeptide is Protein PsbN (Aneura mirabilis (Parasitic liverwort)).